The following is an 88-amino-acid chain: Small cysteine-rich outer membrane protein OmcA (88 aa).

Residues 1–18 (MKKTALLAALCSVVSLSS) form the signal peptide. The N-palmitoyl cysteine moiety is linked to residue C19. Residue C19 is the site of S-diacylglycerol cysteine attachment.

In terms of assembly, part of a disulfide cross-linked outer membrane complex (COMC) composed of the major outer membrane porin (MOMP), the small cysteine-rich protein (OmcA) and the large cysteine-rich periplasmic protein (OmcB).

The protein resides in the cell outer membrane. In elementary bodies (EBs, the infectious stage, which is able to survive outside the host cell) provides the structural integrity of the outer envelope through disulfide cross-links with the large cysteine-rich periplasmic protein and the major outer membrane porin. It has been described in publications as the Sarkosyl-insoluble COMC (Chlamydia outer membrane complex), and serves as the functional equivalent of peptidoglycan. The polypeptide is Small cysteine-rich outer membrane protein OmcA (omcA) (Chlamydia muridarum (strain MoPn / Nigg)).